Consider the following 217-residue polypeptide: 3,4-dihydroxy-2-butanone 4-phosphate synthase (217 aa).

Residues 37 to 38, D42, 150 to 154, and E174 each bind D-ribulose 5-phosphate; these read RE and RRGHT. E38 serves as a coordination point for Mg(2+). H153 contacts Mg(2+).

This sequence belongs to the DHBP synthase family. As to quaternary structure, homodimer. Requires Mg(2+) as cofactor. It depends on Mn(2+) as a cofactor.

It catalyses the reaction D-ribulose 5-phosphate = (2S)-2-hydroxy-3-oxobutyl phosphate + formate + H(+). It functions in the pathway cofactor biosynthesis; riboflavin biosynthesis; 2-hydroxy-3-oxobutyl phosphate from D-ribulose 5-phosphate: step 1/1. Catalyzes the conversion of D-ribulose 5-phosphate to formate and 3,4-dihydroxy-2-butanone 4-phosphate. The sequence is that of 3,4-dihydroxy-2-butanone 4-phosphate synthase from Yersinia enterocolitica serotype O:8 / biotype 1B (strain NCTC 13174 / 8081).